Here is a 439-residue protein sequence, read N- to C-terminus: Synaptotagmin-B (439 aa).

Over 1–74 the chain is Vesicular; that stretch reads MQAEMNQSAE…KEKFMNELQK (74 aa). 2 N-linked (GlcNAc...) asparagine glycosylation sites follow: N6 and N46. Residues 75–101 traverse the membrane as a helical segment; sequence IPLPPWALIAIAIVSGLLLLTCCLCIC. Residues 102–439 are Cytoplasmic-facing; the sequence is KKCCCKKKKN…EVDVALGLKK (338 aa). Positions 113-155 are disordered; sequence KEKGKGKKNDINMKDVKGSGGNQDDDDAETGLTEGEDKEEEAK. Positions 119–129 are enriched in basic and acidic residues; that stretch reads KKNDINMKDVK. Over residues 135–151 the composition is skewed to acidic residues; sequence QDDDDAETGLTEGEDKE. The tract at residues 153 to 399 is phospholipid binding; it reads EAKEEEKLGK…AIGKIFVGSN (247 aa). C2 domains lie at 159–278 and 290–423; these read KLGK…EEWR and KLGD…AQWH. L189, D190, D196, D248, F249, D250, S253, K254, D256, D321, D327, D381, D383, and D389 together coordinate Ca(2+).

The protein belongs to the synaptotagmin family. As to quaternary structure, homodimer or homotrimer (possible). Requires Ca(2+) as cofactor. In terms of tissue distribution, spinal cord, brainstem, midbrain and electric organ.

It localises to the cytoplasmic vesicle. The protein localises to the secretory vesicle. The protein resides in the synaptic vesicle membrane. Its subcellular location is the synapse. Functionally, may have a regulatory role in the membrane interactions during trafficking of synaptic vesicles at the active zone of the synapse. It binds acidic phospholipids with a specificity that requires the presence of both an acidic head group and a diacyl backbone. The polypeptide is Synaptotagmin-B (P65-B) (Diplobatis ommata (Ocellated electric ray)).